The following is a 123-amino-acid chain: Small ribosomal subunit protein uS12 (123 aa).

Asp-89 bears the 3-methylthioaspartic acid mark.

This sequence belongs to the universal ribosomal protein uS12 family. Part of the 30S ribosomal subunit. Contacts proteins S8 and S17. May interact with IF1 in the 30S initiation complex.

With S4 and S5 plays an important role in translational accuracy. Functionally, interacts with and stabilizes bases of the 16S rRNA that are involved in tRNA selection in the A site and with the mRNA backbone. Located at the interface of the 30S and 50S subunits, it traverses the body of the 30S subunit contacting proteins on the other side and probably holding the rRNA structure together. The combined cluster of proteins S8, S12 and S17 appears to hold together the shoulder and platform of the 30S subunit. The chain is Small ribosomal subunit protein uS12 from Trichlorobacter lovleyi (strain ATCC BAA-1151 / DSM 17278 / SZ) (Geobacter lovleyi).